Consider the following 232-residue polypeptide: 2-C-methyl-D-erythritol 4-phosphate cytidylyltransferase (232 aa).

It belongs to the IspD/TarI cytidylyltransferase family. IspD subfamily.

The enzyme catalyses 2-C-methyl-D-erythritol 4-phosphate + CTP + H(+) = 4-CDP-2-C-methyl-D-erythritol + diphosphate. It functions in the pathway isoprenoid biosynthesis; isopentenyl diphosphate biosynthesis via DXP pathway; isopentenyl diphosphate from 1-deoxy-D-xylulose 5-phosphate: step 2/6. Catalyzes the formation of 4-diphosphocytidyl-2-C-methyl-D-erythritol from CTP and 2-C-methyl-D-erythritol 4-phosphate (MEP). The sequence is that of 2-C-methyl-D-erythritol 4-phosphate cytidylyltransferase from Rhodococcus erythropolis (strain PR4 / NBRC 100887).